The following is a 511-amino-acid chain: Lysine--tRNA ligase (511 aa).

Mg(2+)-binding residues include glutamate 421 and glutamate 428.

This sequence belongs to the class-II aminoacyl-tRNA synthetase family. Homodimer. Mg(2+) serves as cofactor.

It is found in the cytoplasm. It carries out the reaction tRNA(Lys) + L-lysine + ATP = L-lysyl-tRNA(Lys) + AMP + diphosphate. This is Lysine--tRNA ligase from Herminiimonas arsenicoxydans.